Reading from the N-terminus, the 479-residue chain is MDDDDIEPLEYETKDETEAALAPQSSEDTLYCEAEAAPSVEKEKPTREDSETDLEIEDTEKFFSIGQKELYLEACKLVGVVPVSYFIRNMEESCMNLNHHGLGPMGIKAIAITLVSNTTVLKLELEDNSIQEEGILSLMEMLHENYYLQELNVSDNNLGLEGARIISDFLQENNSSLWKLKLSGNKFKEECALLLCQALSSNYRIRSLNLSHNEFSDTAGEYLGQMLALNVGLQSLNLSWNHFNVRGAVALCNGLRTNVTLKKLDVSMNGFGNDGALALGDTLKLNSCLVYVDVSRNGITNEGASRISKGLENNECLQVLKLFLNPVSLEGAYSLILAIKRNPKSRMEDLDISNVLVSEQFVKVLDGVCAIHPQLDVVYKGLQGLSTKKTVSLETNPIKLIQNYTDQNKISVVEFFKSLNPSGLMTMPVGDFRKAIIQQTNIPINRYQARELIKKLEEKNGMVNFSGFKSLKVTAAGQL.

Residues 1–10 (MDDDDIEPLE) are compositionally biased toward acidic residues. The segment at 1 to 29 (MDDDDIEPLEYETKDETEAALAPQSSEDT) is disordered. LRR repeat units lie at residues 119-140 (TVLKLELEDNSIQEEGILSLME), 147-167 (YLQELNVSDNNLGLEGARIIS), 176-197 (SLWKLKLSGNKFKEECALLLCQ), 204-225 (RIRSLNLSHNEFSDTAGEYLGQ), 232-253 (GLQSLNLSWNHFNVRGAVALCN), 260-281 (TLKKLDVSMNGFGNDGALALGD), 288-309 (CLVYVDVSRNGITNEGASRISK), and 316-336 (CLQVLKLFLNPVSLEGAYSLI).

The chain is Leucine-rich repeat-containing protein 74A from Rattus norvegicus (Rat).